A 206-amino-acid chain; its full sequence is Guanylate kinase (206 aa).

One can recognise a Guanylate kinase-like domain in the interval 7-185; sequence GIVLVLCAPS…AYDELRAAYL (179 aa). An ATP-binding site is contributed by 14–21; that stretch reads APSGTGKT.

This sequence belongs to the guanylate kinase family.

It is found in the cytoplasm. The enzyme catalyses GMP + ATP = GDP + ADP. Its function is as follows. Essential for recycling GMP and indirectly, cGMP. The chain is Guanylate kinase from Oleidesulfovibrio alaskensis (strain ATCC BAA-1058 / DSM 17464 / G20) (Desulfovibrio alaskensis).